Consider the following 131-residue polypeptide: Small ribosomal subunit protein bS6 (131 aa).

Residues 96-131 (VTEASPMAKAKDERDSRRGPAGDRSYDEANAEEIAE) are disordered. Over residues 104-122 (KAKDERDSRRGPAGDRSYD) the composition is skewed to basic and acidic residues.

The protein belongs to the bacterial ribosomal protein bS6 family.

Functionally, binds together with bS18 to 16S ribosomal RNA. This chain is Small ribosomal subunit protein bS6, found in Shewanella sp. (strain MR-4).